The following is a 185-amino-acid chain: ATP-dependent protease subunit HslV (185 aa).

Residue threonine 13 is part of the active site. Positions 167, 170, and 173 each coordinate Na(+).

It belongs to the peptidase T1B family. HslV subfamily. A double ring-shaped homohexamer of HslV is capped on each side by a ring-shaped HslU homohexamer. The assembly of the HslU/HslV complex is dependent on binding of ATP.

Its subcellular location is the cytoplasm. The catalysed reaction is ATP-dependent cleavage of peptide bonds with broad specificity.. Its activity is regulated as follows. Allosterically activated by HslU binding. Protease subunit of a proteasome-like degradation complex believed to be a general protein degrading machinery. This Sinorhizobium medicae (strain WSM419) (Ensifer medicae) protein is ATP-dependent protease subunit HslV.